The following is a 1229-amino-acid chain: DNA-directed RNA polymerase subunit beta (1229 aa).

This sequence belongs to the RNA polymerase beta chain family. In terms of assembly, the RNAP catalytic core consists of 2 alpha, 1 beta, 1 beta' and 1 omega subunit. When a sigma factor is associated with the core the holoenzyme is formed, which can initiate transcription.

The catalysed reaction is RNA(n) + a ribonucleoside 5'-triphosphate = RNA(n+1) + diphosphate. Its function is as follows. DNA-dependent RNA polymerase catalyzes the transcription of DNA into RNA using the four ribonucleoside triphosphates as substrates. The polypeptide is DNA-directed RNA polymerase subunit beta (Roseiflexus sp. (strain RS-1)).